The following is a 100-amino-acid chain: Urease subunit gamma (100 aa).

The protein belongs to the urease gamma subunit family. As to quaternary structure, heterotrimer of UreA (gamma), UreB (beta) and UreC (alpha) subunits. Three heterotrimers associate to form the active enzyme.

It localises to the cytoplasm. It catalyses the reaction urea + 2 H2O + H(+) = hydrogencarbonate + 2 NH4(+). The protein operates within nitrogen metabolism; urea degradation; CO(2) and NH(3) from urea (urease route): step 1/1. The protein is Urease subunit gamma of Picosynechococcus sp. (strain ATCC 27264 / PCC 7002 / PR-6) (Agmenellum quadruplicatum).